Consider the following 350-residue polypeptide: GTPase Obg (350 aa).

The 158-residue stretch at 1–158 (MFIDSVKITL…RLVRLELKLI (158 aa)) folds into the Obg domain. Positions 159–339 (ADVGLVGFPN…LKFMLLEEIK (181 aa)) constitute an OBG-type G domain. Residues 165–172 (GFPNVGKS), 190–194 (FTTLT), 212–215 (DIPG), 280–283 (SKSD), and 320–322 (SSL) each bind GTP. Serine 172 and threonine 192 together coordinate Mg(2+).

The protein belongs to the TRAFAC class OBG-HflX-like GTPase superfamily. OBG GTPase family. Monomer. Mg(2+) serves as cofactor.

The protein resides in the cytoplasm. Its function is as follows. An essential GTPase which binds GTP, GDP and possibly (p)ppGpp with moderate affinity, with high nucleotide exchange rates and a fairly low GTP hydrolysis rate. Plays a role in control of the cell cycle, stress response, ribosome biogenesis and in those bacteria that undergo differentiation, in morphogenesis control. This Campylobacter jejuni (strain RM1221) protein is GTPase Obg.